The sequence spans 419 residues: MLTSFKLHSLKPYTLKSSMILEIITYILCFFSMIIAFVDNTFSIKIYNITAIVCLLSLILRGRQENYNIKNLILPLSIFLIGLLDLIWYSAFKVDNSPFRATYHSYLNTAKIFIFGSFIVFLTLTSQLKSKKESVLYTLYSLSFLIAGYAMYINSIHENDRISFGVGTATGAAYSTMLIGIVSGVAILYTKKNHPFLFLLNSCAVLYVLALTQTRATLLLFPIICVAALIAYYNKSPKKFTSSIVLLIAILASIVIIFNKPIQNRYNEALNDLNSYTNANSVTSLGARLAMYEIGLNIFIKSPFSFRSAESRAESMNLLVAEHNRLRGALEFSNVHLHNEIIEAGSLKGLMGIFSTLFLYFSLFYIAYKKRALGLLILTLGIVGIGLSDVIIWARSIPIIIISAIVLLLVINNRNNTIN.

Over 1-19 (MLTSFKLHSLKPYTLKSSM) the chain is Cytoplasmic. Residues 20–38 (ILEIITYILCFFSMIIAFV) form a helical membrane-spanning segment. Residues 39–43 (DNTFS) lie on the Periplasmic side of the membrane. The helical transmembrane segment at 44–61 (IKIYNITAIVCLLSLILR) threads the bilayer. The Cytoplasmic segment spans residues 62–71 (GRQENYNIKN). The chain crosses the membrane as a helical span at residues 72-91 (LILPLSIFLIGLLDLIWYSA). Residues 92 to 107 (FKVDNSPFRATYHSYL) are Periplasmic-facing. A helical transmembrane segment spans residues 108 to 125 (NTAKIFIFGSFIVFLTLT). The Cytoplasmic portion of the chain corresponds to 126–134 (SQLKSKKES). A helical membrane pass occupies residues 135–153 (VLYTLYSLSFLIAGYAMYI). Residues 154-167 (NSIHENDRISFGVG) are Periplasmic-facing. Residues 168–187 (TATGAAYSTMLIGIVSGVAI) form a helical membrane-spanning segment. The Cytoplasmic segment spans residues 188–194 (LYTKKNH). The chain crosses the membrane as a helical span at residues 195 to 211 (PFLFLLNSCAVLYVLAL). At 212–216 (TQTRA) the chain is on the periplasmic side. The helical transmembrane segment at 217–234 (TLLLFPIICVAALIAYYN) threads the bilayer. The Cytoplasmic segment spans residues 235 to 240 (KSPKKF). The chain crosses the membrane as a helical span at residues 241–259 (TSSIVLLIAILASIVIIFN). Topologically, residues 260-348 (KPIQNRYNEA…NEIIEAGSLK (89 aa)) are periplasmic. A helical transmembrane segment spans residues 349–367 (GLMGIFSTLFLYFSLFYIA). At 368–372 (YKKRA) the chain is on the cytoplasmic side. The chain crosses the membrane as a helical span at residues 373 to 391 (LGLLILTLGIVGIGLSDVI). The Periplasmic portion of the chain corresponds to 392-396 (IWARS). A helical transmembrane segment spans residues 397-412 (IPIIIISAIVLLLVIN). The Cytoplasmic segment spans residues 413-419 (NRNNTIN).

In terms of assembly, homodimer.

Its subcellular location is the cell inner membrane. The catalysed reaction is a lipid-linked O antigen + a lipid A-core oligosaccharide = a lipopolysaccharide + a polyisoprenyl diphosphate.. Its pathway is bacterial outer membrane biogenesis; lipopolysaccharide biosynthesis. Activity does not require ATP and magnesium ions. In terms of biological role, transferase involved in the biosynthesis of the lipopolysaccharide (LPS). In vitro, catalyzes the transfer of a polymerized O-antigen molecule from its polyprenyl diphosphate membrane anchor to a terminal sugar of the lipid A-core oligosaccharide, finalizing the biosynthesis of the lipopolysaccharide. The enzyme is functional and can be used to give diverse hybrid O-antigens in vitro, but K12 strains do not produce the O-antigen in vivo due to mutations in the rfb gene cluster. K12 strains are phenotypically rough, their lipopolysaccharide having a complete core structure, but no O-antigen. In highly mucoid K12 strains, WaaL can ligate colanic acid (CA or M-antigen) repeats to a significant proportion of lipopolysaccharide (LPS) core acceptor molecules, forming the LPS glycoform M(LPS). The attachment point was identified as O-7 of the L-glycero-D-manno-heptose of the outer LPS core, the same position used for O-antigen ligation. Cannot catalyze ATP hydrolysis in vitro. The polypeptide is O-antigen ligase (Escherichia coli (strain K12)).